The chain runs to 284 residues: MNWITNFVRPRINSVFGRRAIPENLWVKCPETGAMVYHKDLKENQWVISSSDFHMKIPAKERLKFLFDNAKYCLLDQPQVCQDPLKFRDNKKYIDRLKENRSKTGLIDSIVSAVGNVRDFKLVAVVHEFSFIGGSIGIAAGEAIVKSCERAIAEKCPLVMFTASGGARMQEGILSLMQLPRTTIAINMLKDAGLPYIVVLTNPTTGGVTASYAMLGDIHLAEPGAEIGFAGRRVIEQTVREKLPDGFQRSEYLVEHGMIDRIVHRHDIPEVVSSLCKILTKSVQ.

In terms of domain architecture, CoA carboxyltransferase N-terminal spans 25 to 284 (LWVKCPETGA…LCKILTKSVQ (260 aa)).

Belongs to the AccD/PCCB family. As to quaternary structure, acetyl-CoA carboxylase is a heterohexamer composed of biotin carboxyl carrier protein (AccB), biotin carboxylase (AccC) and two subunits each of ACCase subunit alpha (AccA) and ACCase subunit beta (AccD).

The protein resides in the cytoplasm. The enzyme catalyses N(6)-carboxybiotinyl-L-lysyl-[protein] + acetyl-CoA = N(6)-biotinyl-L-lysyl-[protein] + malonyl-CoA. The protein operates within lipid metabolism; malonyl-CoA biosynthesis; malonyl-CoA from acetyl-CoA: step 1/1. Component of the acetyl coenzyme A carboxylase (ACC) complex. Biotin carboxylase (BC) catalyzes the carboxylation of biotin on its carrier protein (BCCP) and then the CO(2) group is transferred by the transcarboxylase to acetyl-CoA to form malonyl-CoA. This chain is Acetyl-coenzyme A carboxylase carboxyl transferase subunit beta, found in Liberibacter asiaticus (strain psy62).